A 470-amino-acid chain; its full sequence is ATP synthase subunit beta (470 aa).

Position 155–162 (155–162) interacts with ATP; sequence GGAGVGKT.

The protein belongs to the ATPase alpha/beta chains family. As to quaternary structure, F-type ATPases have 2 components, CF(1) - the catalytic core - and CF(0) - the membrane proton channel. CF(1) has five subunits: alpha(3), beta(3), gamma(1), delta(1), epsilon(1). CF(0) has three main subunits: a(1), b(2) and c(9-12). The alpha and beta chains form an alternating ring which encloses part of the gamma chain. CF(1) is attached to CF(0) by a central stalk formed by the gamma and epsilon chains, while a peripheral stalk is formed by the delta and b chains.

The protein resides in the cell inner membrane. It carries out the reaction ATP + H2O + 4 H(+)(in) = ADP + phosphate + 5 H(+)(out). Its function is as follows. Produces ATP from ADP in the presence of a proton gradient across the membrane. The catalytic sites are hosted primarily by the beta subunits. The polypeptide is ATP synthase subunit beta (Oleidesulfovibrio alaskensis (strain ATCC BAA-1058 / DSM 17464 / G20) (Desulfovibrio alaskensis)).